A 343-amino-acid polypeptide reads, in one-letter code: GTPase Obg (343 aa).

The region spanning 1–159 (MKFLDEAKVY…HWLWLRLKLI (159 aa)) is the Obg domain. The OBG-type G domain maps to 160–327 (ADAGLVGLPN…ALRALLAAMD (168 aa)). Residues 166-173 (GLPNAGKS), 191-195 (FTTLH), 212-215 (DIPG), 279-282 (SKAD), and 308-310 (SAA) contribute to the GTP site. Mg(2+) contacts are provided by serine 173 and threonine 193.

This sequence belongs to the TRAFAC class OBG-HflX-like GTPase superfamily. OBG GTPase family. Monomer. Mg(2+) is required as a cofactor.

It localises to the cytoplasm. Functionally, an essential GTPase which binds GTP, GDP and possibly (p)ppGpp with moderate affinity, with high nucleotide exchange rates and a fairly low GTP hydrolysis rate. Plays a role in control of the cell cycle, stress response, ribosome biogenesis and in those bacteria that undergo differentiation, in morphogenesis control. This Methylobacterium sp. (strain 4-46) protein is GTPase Obg.